The chain runs to 541 residues: 5' exonuclease Apollo (541 aa).

Lys-334 participates in a covalent cross-link: Glycyl lysine isopeptide (Lys-Gly) (interchain with G-Cter in SUMO2). Disordered regions lie at residues 350-375 (TQGV…KKHK) and 450-489 (IGLG…TTHL). Positions 358-371 (PEEKADQVKVDRDS) are enriched in basic and acidic residues. The TBM signature appears at 492-507 (ESGGLALKYLLTPVDF).

The protein belongs to the DNA repair metallo-beta-lactamase (DRMBL) family. In terms of assembly, interacts with TERF2; the interaction is direct. Interacts with MUS81, MRE11 and FANCD2. Interacts with HSPA2, HSPA8 and HSPA14. Interacts with SPAG5. Ubiquitinated, leading to its degradation. Interaction with TERF2 protects it from ubiquitination.

Its subcellular location is the chromosome. The protein localises to the telomere. The protein resides in the nucleus. It is found in the cytoplasm. It localises to the cytoskeleton. Its subcellular location is the microtubule organizing center. The protein localises to the centrosome. The enzyme catalyses a beta-lactam + H2O = a substituted beta-amino acid. Its function is as follows. 5'-3' exonuclease that plays a central role in telomere maintenance and protection during S-phase. Participates in the protection of telomeres against non-homologous end-joining (NHEJ)-mediated repair, thereby ensuring that telomeres do not fuse. Plays a key role in telomeric loop (T loop) formation by being recruited by TERF2 at the leading end telomeres and by processing leading-end telomeres immediately after their replication via its exonuclease activity: generates 3' single-stranded overhang at the leading end telomeres avoiding blunt leading-end telomeres that are vulnerable to end-joining reactions and expose the telomere end in a manner that activates the DNA repair pathways. Together with TERF2, required to protect telomeres from replicative damage during replication by controlling the amount of DNA topoisomerase (TOP1, TOP2A and TOP2B) needed for telomere replication during fork passage and prevent aberrant telomere topology. Also involved in response to DNA damage: plays a role in response to DNA interstrand cross-links (ICLs) by facilitating double-strand break formation. In case of spindle stress, involved in prophase checkpoint. Possesses beta-lactamase activity, catalyzing the hydrolysis of penicillin G and nitrocefin. Exhibits no activity towards other beta-lactam antibiotic classes including cephalosporins (cefotaxime) and carbapenems (imipenem). The sequence is that of 5' exonuclease Apollo (Dclre1b) from Rattus norvegicus (Rat).